The chain runs to 837 residues: Protein kintoun (837 aa).

Disordered regions lie at residues 100 to 119 (APSS…GSHW), 205 to 224 (LPGV…LPDF), 230 to 249 (YPAA…LQPA), and 363 to 515 (AAAP…GPGT). Over residues 233–242 (APGPRAPSPP) the composition is skewed to pro residues. The span at 428-442 (GEERVPKPGEQDLSR) shows a compositional bias: basic and acidic residues. Residues 445–459 (GSPPGSVEEPSPGGE) are compositionally biased toward low complexity. Phosphoserine is present on residues S461 and S467. Positions 484 to 498 (ESARGDSSVETREES) are enriched in basic and acidic residues. S640, S641, and S773 each carry phosphoserine.

The protein belongs to the PIH1 family. Kintoun subfamily. Interacts with CFAP300. Interacts with DNAAF4. Interacts with DNAAF6/PIH1D3. Interacts with DNAI2 and HSPA1A.

It is found in the cytoplasm. The protein localises to the dynein axonemal particle. Required for cytoplasmic pre-assembly of axonemal dyneins, thereby playing a central role in motility in cilia and flagella. Involved in pre-assembly of dynein arm complexes in the cytoplasm before intraflagellar transport loads them for the ciliary compartment. This Homo sapiens (Human) protein is Protein kintoun.